The chain runs to 210 residues: MVNYTVKNWQGEEAGTGTLELKTAKPETAKHLIHRVVVSHLAAARQGNASSKTRSEVRGGGRKPWRQKGTGRARAGSIRSPLWRGGGVIFGPKPRDFEVKVNRKEKRLALRTALISQADNFIVVESFAEQFSQPKTKELTAALSRWGASPEEKILLILTEIPENVYLSGRNICNLKIIRADSLNVYDVILADRVIATAAALAKIEEVYGA.

Residues 44 to 77 form a disordered region; it reads ARQGNASSKTRSEVRGGGRKPWRQKGTGRARAGS. Positions 60–71 are enriched in basic residues; that stretch reads GGRKPWRQKGTG.

Belongs to the universal ribosomal protein uL4 family. Part of the 50S ribosomal subunit.

Functionally, one of the primary rRNA binding proteins, this protein initially binds near the 5'-end of the 23S rRNA. It is important during the early stages of 50S assembly. It makes multiple contacts with different domains of the 23S rRNA in the assembled 50S subunit and ribosome. Forms part of the polypeptide exit tunnel. The chain is Large ribosomal subunit protein uL4 from Microcystis aeruginosa (strain NIES-843 / IAM M-2473).